Here is a 579-residue protein sequence, read N- to C-terminus: Fatty-acid amide hydrolase 1 (579 aa).

Residues Ala9–Leu29 form a helical membrane-spanning segment. Topologically, residues Arg30–Asp403 are cytoplasmic. The Charge relay system role is filled by Lys142. Residues Met191, Ser217, and Ile238–Ser241 each bind substrate. Ser217 (charge relay system) is an active-site residue. The Acyl-ester intermediate role is filled by Ser241. The residue at position 241 (Ser241) is a Phosphoserine. The stretch at Leu404 to Leu433 is an intramembrane region. The Cytoplasmic segment spans residues Ser434–Ser579.

Belongs to the amidase family. Homodimer.

The protein resides in the endoplasmic reticulum membrane. It is found in the golgi apparatus membrane. It carries out the reaction N-(5Z,8Z,11Z,14Z-eicosatetraenoyl)-ethanolamine + H2O = ethanolamine + (5Z,8Z,11Z,14Z)-eicosatetraenoate. The catalysed reaction is (9Z)-octadecenamide + H2O = (9Z)-octadecenoate + NH4(+). It catalyses the reaction 2-(5Z,8Z,11Z,14Z-eicosatetraenoyl)-glycerol + H2O = glycerol + (5Z,8Z,11Z,14Z)-eicosatetraenoate + H(+). The enzyme catalyses 1-O-methyl-(5Z,8Z,11Z,14Z)-eicosatetraenoate + H2O = methanol + (5Z,8Z,11Z,14Z)-eicosatetraenoate + H(+). It carries out the reaction (9Z,12Z,15Z)-octadecatrienamide + H2O = (9Z,12Z,15Z)-octadecatrienoate + NH4(+). The catalysed reaction is (5Z,8Z,11Z,14Z)-eicosatetraenamide + H2O = (5Z,8Z,11Z,14Z)-eicosatetraenoate + NH4(+). It catalyses the reaction (6Z)-octadecenamide + H2O = (6Z)-octadecenoate + NH4(+). The enzyme catalyses (15Z)-tetracosenamide + H2O = (15Z)-tetracosenoate + NH4(+). It carries out the reaction (8Z,11Z,14Z)-eicosatrienamide + H2O = (8Z,11Z,14Z)-eicosatrienoate + NH4(+). The catalysed reaction is (11Z,14Z,17Z)-eicosatrienamide + H2O = (11Z,14Z,17Z)-eicosatrienoate + NH4(+). It catalyses the reaction (11Z,14Z)-eicosadienamide + H2O = (11Z,14Z)-eicosadienoate + NH4(+). The enzyme catalyses (9Z,12Z)-octadecadienamide + H2O = (9Z,12Z)-octadecadienoate + NH4(+). It carries out the reaction tetradecamide + H2O = tetradecanoate + NH4(+). The catalysed reaction is N-(9Z-octadecenoyl) ethanolamine + H2O = ethanolamine + (9Z)-octadecenoate. It catalyses the reaction N-(9Z-octadecenoyl)-taurine + H2O = taurine + (9Z)-octadecenoate. The enzyme catalyses (11Z)-eicosenamide + H2O = (11Z)-eicosenoate + NH4(+). It carries out the reaction N-(9Z-hexadecenoyl) ethanolamine + H2O = (9Z)-hexadecenoate + ethanolamine. The catalysed reaction is N-octadecanoyl ethanolamine + H2O = octadecanoate + ethanolamine. It catalyses the reaction N-docosanoyl-ethanolamine + H2O = docosanoate + ethanolamine. The enzyme catalyses N-tetracosanoyl-taurine + H2O = tetracosanoate + taurine. It carries out the reaction N-(15Z-tetracosenoyl)-ethanolamine + H2O = (15Z)-tetracosenoate + ethanolamine. The catalysed reaction is N-docosanoyl-taurine + H2O = docosanoate + taurine. It catalyses the reaction N-(15Z-tetracosenoyl)-taurine + H2O = (15Z)-tetracosenoate + taurine. The enzyme catalyses N-tricosanoyl-taurine + H2O = tricosanoate + taurine. It carries out the reaction (9Z)-octadecenoate + glycine = N-(9Z-octadecenoyl)glycine + H2O. The catalysed reaction is N-(5Z,8Z,11Z,14Z)-eicosatetraenoyl-glycine + H2O = (5Z,8Z,11Z,14Z)-eicosatetraenoate + glycine. It catalyses the reaction N-(5Z,8Z,11Z,14Z-eicosatetraenoyl)-L-serine + H2O = (5Z,8Z,11Z,14Z)-eicosatetraenoate + L-serine. With respect to regulation, inhibited by trifluoromethyl ketone. Its function is as follows. Catalyzes the hydrolysis of endogenous amidated lipids like the sleep-inducing lipid oleamide ((9Z)-octadecenamide), the endocannabinoid anandamide (N-(5Z,8Z,11Z,14Z-eicosatetraenoyl)-ethanolamine), as well as other fatty amides, to their corresponding fatty acids, thereby regulating the signaling functions of these molecules. Also catalyzes the hydrolysis of the endocannabinoid 2-arachidonoylglycerol (2-(5Z,8Z,11Z,14Z-eicosatetraenoyl)-glycerol). FAAH cooperates with PM20D1 in the hydrolysis of amino acid-conjugated fatty acids such as N-fatty acyl glycine and N-fatty acyl-L-serine, thereby acting as a physiological regulator of specific subsets of intracellular, but not of extracellular, N-fatty acyl amino acids. This is Fatty-acid amide hydrolase 1 (FAAH) from Sus scrofa (Pig).